An 802-amino-acid polypeptide reads, in one-letter code: Cell division cycle 5-like protein (802 aa).

HTH myb-type domains are found at residues 1–56 and 57–108; these read MPRI…WLDP and SIKK…DKAA. 2 DNA-binding regions (H-T-H motif) span residues 31–54 and 82–104; these read WSRI…YEWL and WRTI…EFLL. The tract at residues 108 to 143 is disordered; it reads AQRDNEEETTDDPRKLKPGEIDPNPETKPARPDPID. Residues 118–127 are compositionally biased toward basic and acidic residues; it reads DDPRKLKPGE. Residue lysine 135 forms a Glycyl lysine isopeptide (Lys-Gly) (interchain with G-Cter in SUMO2) linkage. Positions 142-245 form a coiled coil; the sequence is IDMDEDELEM…DADFRKLRQQ (104 aa). The Nuclear localization signal motif lies at 165-271; sequence KKAKRKAREK…KDKQHLKRKK (107 aa). Residues 200 to 206 form a required for interaction with CTNNBL1 region; that stretch reads KKRKKKR. A Glycyl lysine isopeptide (Lys-Gly) (interchain with G-Cter in SUMO2) cross-link involves residue lysine 219. A Phosphothreonine modification is found at threonine 227. Residues 246–262 are compositionally biased toward basic and acidic residues; it reads DLDGELRSEKEGRDRKK. Residues 246-278 form a disordered region; the sequence is DLDGELRSEKEGRDRKKDKQHLKRKKESDLPSA. An interaction with PPP1R8 region spans residues 260–606; sequence RKKDKQHLKR…NKKGKTVGFG (347 aa). Residues serine 303 and serine 358 each carry the phosphoserine modification. A phosphothreonine mark is found at threonine 377, threonine 385, threonine 396, threonine 404, threonine 411, and threonine 415. Residues 409–418 are compositionally biased toward polar residues; the sequence is LSTPFRTPSH. A disordered region spans residues 409–459; it reads LSTPFRTPSHGSEGLTPRSGTTPKPVINSTPGRTPLRDKLNINPEDGMADY. Serine 417 carries the post-translational modification Phosphoserine. Residues threonine 424 and threonine 430 each carry the phosphothreonine modification. The segment covering 426 to 440 has biased composition (polar residues); it reads RSGTTPKPVINSTPG. Serine 437 carries the phosphoserine modification. Threonine 438 and threonine 442 each carry phosphothreonine. A Glycyl lysine isopeptide (Lys-Gly) (interchain with G-Cter in SUMO2) cross-link involves residue lysine 487. Residues 501–659 form an interaction with DAPK3 region; the sequence is ELEEREIDDT…GELSSEAYNQ (159 aa). Coiled coils occupy residues 676-701 and 764-802; these read RYTR…INRG and PRRL…KAKF. Positions 706 to 800 are interaction with PLRG1; that stretch reads EAKRAAKMEK…LLLEKETLKA (95 aa).

It belongs to the CEF1 family. Homodimer. Interacts with DAPK3. Component of the precatalytic, catalytic and postcatalytic spliceosome complexes. Part of a spliceosomal 'core' complex consisting of CDC5L, PLRG1, SPF27, CCAP1, CCAP3 and CCAP6. Interacts with PLRG1, Lodestar/TTF2, and NIPP1/PPP1R8. Component of the minor spliceosome, which splices U12-type introns. Within this complex, interacts with SCNM1. Component of the PRP19-CDC5L splicing complex composed of a core complex comprising a homotetramer of PRPF19, CDC5L, PLRG1 and BCAS2, and at least three less stably associated proteins CTNNBL1, CWC15 and HSPA8. Interacts (via its C-terminus) directly in the complex with PRPF19 and BCAS2. Interacts (via its C-terminus) directly with PRGL1 (via its WD40 repeat domain); the interaction is required for mRNA splicing but not for spliceosome assembly. Also interacts with CTNNBL1. Interacts with PRPF19 (via N-terminus). Interacts with USB1. Interacts with DDX41. Phosphorylated on serine and threonine residues. Phosphorylation on Thr-411 and Thr-438 is required for CDC5L-mediated mRNA splicing. Has no effect on subcellular location nor on homodimerization. Phosphorylated in vitro by CDK2. Phosphorylation enhances interaction with PPP1R8.

It localises to the nucleus. Its subcellular location is the nucleus speckle. The protein resides in the cytoplasm. Functionally, DNA-binding protein involved in cell cycle control. May act as a transcription activator. Plays a role in pre-mRNA splicing as core component of precatalytic, catalytic and postcatalytic spliceosomal complexes. Component of the PRP19-CDC5L complex that forms an integral part of the spliceosome and is required for activating pre-mRNA splicing. The PRP19-CDC5L complex may also play a role in the response to DNA damage (DDR). As a component of the minor spliceosome, involved in the splicing of U12-type introns in pre-mRNAs. In Bos taurus (Bovine), this protein is Cell division cycle 5-like protein (CDC5L).